The chain runs to 393 residues: S-adenosylmethionine synthase 3 (393 aa).

Glutamate 9 serves as a coordination point for Mg(2+). Position 15 (histidine 15) interacts with ATP. Position 43 (glutamate 43) interacts with K(+). Residues glutamate 56 and glutamine 99 each contribute to the L-methionine site. ATP is bound by residues 167-169, 235-238, aspartate 246, 252-253, alanine 269, lysine 273, and lysine 277; these read DGK, SGRF, and RK. Aspartate 246 lines the L-methionine pocket. Lysine 277 is an L-methionine binding site.

The protein belongs to the AdoMet synthase family. As to quaternary structure, homotetramer. Mn(2+) is required as a cofactor. The cofactor is Mg(2+). Requires Co(2+) as cofactor. K(+) serves as cofactor.

The protein localises to the cytoplasm. It catalyses the reaction L-methionine + ATP + H2O = S-adenosyl-L-methionine + phosphate + diphosphate. The protein operates within amino-acid biosynthesis; S-adenosyl-L-methionine biosynthesis; S-adenosyl-L-methionine from L-methionine: step 1/1. Its function is as follows. Catalyzes the formation of S-adenosylmethionine from methionine and ATP. The reaction comprises two steps that are both catalyzed by the same enzyme: formation of S-adenosylmethionine (AdoMet) and triphosphate, and subsequent hydrolysis of the triphosphate. The polypeptide is S-adenosylmethionine synthase 3 (SAM3) (Petunia hybrida (Petunia)).